The sequence spans 87 residues: MAHKKGASSSRNGRDSNAQRLGVKRFGGQSVSAGEILVRQRGTHFHPGVNVGRGGDDTLFALSAGAVEFGTKRGRKTVNIVPAAAEA.

A disordered region spans residues 1-25 (MAHKKGASSSRNGRDSNAQRLGVKR). Positions 7–19 (ASSSRNGRDSNAQ) are enriched in polar residues.

The protein belongs to the bacterial ribosomal protein bL27 family.

The chain is Large ribosomal subunit protein bL27 from Rhodococcus jostii (strain RHA1).